The sequence spans 467 residues: Sialic acid-binding Ig-like lectin 7 (467 aa).

An N-terminal signal peptide occupies residues 1 to 18 (MLLLLLLPLLWGRERVEG). The Extracellular segment spans residues 19 to 353 (QKSNRKDYSL…KMRPVSGVLL (335 aa)). The region spanning 39–122 (GMCVHVRCSF…ARMSDAGRYF (84 aa)) is the Ig-like V-type domain. An intrachain disulfide couples Cys46 to Cys106. Asn105 carries N-linked (GlcNAc...) asparagine glycosylation. Residues Arg124 and 131–135 (KWNYK) contribute to the N-acetylneuraminate site. N-linked (GlcNAc...) asparagine glycosylation is found at Asn142 and Asn165. Residues 150-233 (PNILIPGTLE…AGVTTNRTIQ (84 aa)) form the Ig-like C2-type 1 domain. Cys168 and Cys217 are oxidised to a cystine. N-linked (GlcNAc...) asparagine glycans are attached at residues Asn229, Asn235, Asn242, and Asn260. The 97-residue stretch at 240–336 (PQNLTVTVFQ…GSQHVSLNLS (97 aa)) folds into the Ig-like C2-type 2 domain. Cys276 and Cys320 are oxidised to a cystine. An N-linked (GlcNAc...) asparagine glycan is attached at Asn334. A helical membrane pass occupies residues 354–376 (GAVGGAGATALVFLSFCVIFIVV). The Cytoplasmic segment spans residues 377–467 (RSCRKKSARP…NEYSEIKIPK (91 aa)). Over residues 401–412 (IRGSASQGNLTE) the composition is skewed to polar residues. The interval 401 to 431 (IRGSASQGNLTESWADDNPRHHGLAAHSSGE) is disordered. Ser429 is modified (phosphoserine). The short motif at 435 to 440 (IQYAPL) is the ITIM motif element. The tract at residues 443–467 (HKGEPQDLSGQEATNNEYSEIKIPK) is disordered. Over residues 450 to 460 (LSGQEATNNEY) the composition is skewed to polar residues.

The protein belongs to the immunoglobulin superfamily. SIGLEC (sialic acid binding Ig-like lectin) family. As to quaternary structure, interacts with PTPN6/SHP-1 upon phosphorylation. In terms of processing, tyrosine phosphorylated. Predominantly expressed by resting and activated natural killer cells and at lower levels by granulocytes and monocytes. High expression found in placenta, liver, lung, spleen, and peripheral blood leukocytes.

The protein localises to the membrane. In terms of biological role, putative adhesion molecule that mediates sialic-acid dependent binding to cells. Preferentially binds to alpha-2,3- and alpha-2,6-linked sialic acid. Also binds disialogangliosides (disialogalactosyl globoside, disialyl lactotetraosylceramide and disialyl GalNAc lactotetraoslylceramide). The sialic acid recognition site may be masked by cis interactions with sialic acids on the same cell surface. In the immune response, may act as an inhibitory receptor upon ligand induced tyrosine phosphorylation by recruiting cytoplasmic phosphatase(s) via their SH2 domain(s) that block signal transduction through dephosphorylation of signaling molecules. Mediates inhibition of natural killer cells cytotoxicity. May play a role in hemopoiesis. Inhibits differentiation of CD34+ cell precursors towards myelomonocytic cell lineage and proliferation of leukemic myeloid cells (in vitro). The chain is Sialic acid-binding Ig-like lectin 7 (SIGLEC7) from Homo sapiens (Human).